A 481-amino-acid chain; its full sequence is Coniferyl aldehyde dehydrogenase (481 aa).

Residues Glu221 and Cys255 contribute to the active site.

This sequence belongs to the aldehyde dehydrogenase family. Homodimer.

It catalyses the reaction (E)-coniferaldehyde + NADP(+) + H2O = (E)-ferulate + NADPH + 2 H(+). The enzyme catalyses (E)-coniferaldehyde + NAD(+) + H2O = (E)-ferulate + NADH + 2 H(+). Catalyzes the NAD(+)-dependent oxidation of coniferyl aldehyde to ferulic acid and which is induced during growth with eugenol as the carbon source. This Pseudomonas sp. (strain HR199 / DSM 7063) protein is Coniferyl aldehyde dehydrogenase (calB).